The chain runs to 164 residues: MVDDSTRKTLSNIPLLQIRAGPREKDVWVQRLKEEYQSLIKYVENNKQSGSDWFRLESNKEGTKWFGKCWYMHELLRYEFDVEFDIPVTYPTTAPEIALPELDGKTAKMYRGGKICLTDHFKPLWARNVPKFGIAHAMALGLAPWLAVEIPDLIEKGIITYKEK.

Residue C116 is the Glycyl thioester intermediate of the active site.

This sequence belongs to the ubiquitin-conjugating enzyme family. UFC1 subfamily.

E2-like enzyme which forms an intermediate with UFM1 via a thioester linkage. The protein is Ubiquitin-fold modifier-conjugating enzyme 1 of Drosophila ananassae (Fruit fly).